The chain runs to 181 residues: NADH-quinone oxidoreductase subunit I (181 aa).

2 4Fe-4S ferredoxin-type domains span residues 52 to 81 (TRDS…LKKS) and 91 to 120 (EFFR…LISD). Cys61, Cys64, Cys67, Cys71, Cys100, Cys103, Cys106, and Cys110 together coordinate [4Fe-4S] cluster.

The protein belongs to the complex I 23 kDa subunit family. NDH-1 is composed of 13 different subunits. Subunits NuoA, H, J, K, L, M, N constitute the membrane sector of the complex. The cofactor is [4Fe-4S] cluster.

The protein resides in the cell inner membrane. The catalysed reaction is a quinone + NADH + 5 H(+)(in) = a quinol + NAD(+) + 4 H(+)(out). Functionally, NDH-1 shuttles electrons from NADH, via FMN and iron-sulfur (Fe-S) centers, to quinones in the respiratory chain. The immediate electron acceptor for the enzyme in this species is believed to be ubiquinone. Couples the redox reaction to proton translocation (for every two electrons transferred, four hydrogen ions are translocated across the cytoplasmic membrane), and thus conserves the redox energy in a proton gradient. This chain is NADH-quinone oxidoreductase subunit I, found in Blochmanniella floridana.